Consider the following 95-residue polypeptide: Large ribosomal subunit protein eL37y (95 aa).

Zn(2+) is bound by residues Cys-19, Cys-22, Cys-34, and Cys-37. A C4-type zinc finger spans residues 19–37; the sequence is CVRCGRRSFHIQKSRCSAC.

This sequence belongs to the eukaryotic ribosomal protein eL37 family. Requires Zn(2+) as cofactor.

Functionally, binds to the 23S rRNA. The chain is Large ribosomal subunit protein eL37y (RPL37B) from Arabidopsis thaliana (Mouse-ear cress).